The sequence spans 157 residues: SsrA-binding protein (157 aa).

This sequence belongs to the SmpB family.

Its subcellular location is the cytoplasm. Functionally, required for rescue of stalled ribosomes mediated by trans-translation. Binds to transfer-messenger RNA (tmRNA), required for stable association of tmRNA with ribosomes. tmRNA and SmpB together mimic tRNA shape, replacing the anticodon stem-loop with SmpB. tmRNA is encoded by the ssrA gene; the 2 termini fold to resemble tRNA(Ala) and it encodes a 'tag peptide', a short internal open reading frame. During trans-translation Ala-aminoacylated tmRNA acts like a tRNA, entering the A-site of stalled ribosomes, displacing the stalled mRNA. The ribosome then switches to translate the ORF on the tmRNA; the nascent peptide is terminated with the 'tag peptide' encoded by the tmRNA and targeted for degradation. The ribosome is freed to recommence translation, which seems to be the essential function of trans-translation. This chain is SsrA-binding protein, found in Limosilactobacillus fermentum (strain NBRC 3956 / LMG 18251) (Lactobacillus fermentum).